The chain runs to 429 residues: UDP-N-acetylglucosamine 1-carboxyvinyltransferase (429 aa).

22-23 (KN) is a binding site for phosphoenolpyruvate. Arg-102 provides a ligand contact to UDP-N-acetyl-alpha-D-glucosamine. The active-site Proton donor is Cys-126. Residue Cys-126 is modified to 2-(S-cysteinyl)pyruvic acid O-phosphothioketal. UDP-N-acetyl-alpha-D-glucosamine is bound by residues 131 to 135 (RPVDL), Asp-316, and Ile-338.

Belongs to the EPSP synthase family. MurA subfamily.

The protein resides in the cytoplasm. The catalysed reaction is phosphoenolpyruvate + UDP-N-acetyl-alpha-D-glucosamine = UDP-N-acetyl-3-O-(1-carboxyvinyl)-alpha-D-glucosamine + phosphate. Its pathway is cell wall biogenesis; peptidoglycan biosynthesis. Its function is as follows. Cell wall formation. Adds enolpyruvyl to UDP-N-acetylglucosamine. The sequence is that of UDP-N-acetylglucosamine 1-carboxyvinyltransferase from Nitrobacter hamburgensis (strain DSM 10229 / NCIMB 13809 / X14).